The chain runs to 545 residues: Tyrosine decarboxylase 2 (545 aa).

The segment covering 23-44 (GYTNGNGHTNGNGNYNGNGHVN) has biased composition (gly residues). The segment at 23–45 (GYTNGNGHTNGNGNYNGNGHVNG) is disordered. H245 and H360 together coordinate L-tyrosine. K361 carries the N6-(pyridoxal phosphate)lysine modification. Y390 is an L-tyrosine binding site.

It belongs to the group II decarboxylase family. As to quaternary structure, homotetramer. Pyridoxal 5'-phosphate serves as cofactor. In terms of tissue distribution, expressed specifically in flowers.

It is found in the cytoplasm. The enzyme catalyses L-tyrosine + H(+) = tyramine + CO2. Its function is as follows. Converts tyrosine into tyramine, a precursor of isoquinoline alkaloids and various amides. In Arabidopsis thaliana (Mouse-ear cress), this protein is Tyrosine decarboxylase 2.